The primary structure comprises 277 residues: Large ribosomal subunit protein uL2 (277 aa).

A disordered region spans residues 222–277 (GVAMNPIDHPHGGGEGRTSGGRHPVTPWGKPTKGKKTRTNKSTDKFILLSRHKRKK).

It belongs to the universal ribosomal protein uL2 family. Part of the 50S ribosomal subunit. Forms a bridge to the 30S subunit in the 70S ribosome.

In terms of biological role, one of the primary rRNA binding proteins. Required for association of the 30S and 50S subunits to form the 70S ribosome, for tRNA binding and peptide bond formation. It has been suggested to have peptidyltransferase activity; this is somewhat controversial. Makes several contacts with the 16S rRNA in the 70S ribosome. The polypeptide is Large ribosomal subunit protein uL2 (Bradyrhizobium sp. (strain ORS 278)).